The following is a 345-amino-acid chain: MLSLRRGLITKSYLNYKFVNHLAVIPRNYSNDSKYFFSKPPANDNNDKGSYADSKHFFTKPNGKMNSNEQIDQMHNNGSNNPNNNKNGSTDSLIGQAILQQRRERRKQVWYALGISIFAVLIGYSIGYKVIYLNEDSFIPLYPSSGIRKPSQNDLRKIDVPHIKLISHLRVLEVLSHHDMIKEQYGVPLHDSNGVNPPQIKEFNIWCEDQDPCVTGLIIRKDDPNRPTTHTWHRIPYLLQWRVTHRPICISRSISNFLEDIGLSYSTIYEIISPEKIYGSFKYEYPIPGDDHSMHIWFLGELQLNNDTLIIYKGKYHVDVKLQQVDLLRNEDGKLVRYVLFKENE.

Residues 1-29 (MLSLRRGLITKSYLNYKFVNHLAVIPRNY) constitute a mitochondrion transit peptide. The disordered stretch occupies residues 46–91 (NDKGSYADSKHFFTKPNGKMNSNEQIDQMHNNGSNNPNNNKNGSTD). A compositionally biased stretch (polar residues) spans 64 to 75 (KMNSNEQIDQMH). A compositionally biased stretch (low complexity) spans 76-89 (NNGSNNPNNNKNGS). Residues 113–133 (LGISIFAVLIGYSIGYKVIYL) form a helical membrane-spanning segment.

The protein belongs to the AIM39 family.

The protein resides in the mitochondrion membrane. The sequence is that of Altered inheritance of mitochondria protein 39, mitochondrial (AIM39) from Vanderwaltozyma polyspora (strain ATCC 22028 / DSM 70294 / BCRC 21397 / CBS 2163 / NBRC 10782 / NRRL Y-8283 / UCD 57-17) (Kluyveromyces polysporus).